Reading from the N-terminus, the 372-residue chain is Alanine dehydrogenase 2 (372 aa).

H95 is an active-site residue. An NAD(+)-binding site is contributed by K169–N199.

Belongs to the AlaDH/PNT family.

The catalysed reaction is L-alanine + NAD(+) + H2O = pyruvate + NH4(+) + NADH + H(+). Its pathway is amino-acid degradation; L-alanine degradation via dehydrogenase pathway; NH(3) and pyruvate from L-alanine: step 1/1. May play a role in cell wall synthesis as L-alanine is an important constituent of the peptidoglycan layer. The chain is Alanine dehydrogenase 2 (ald2) from Staphylococcus aureus (strain COL).